We begin with the raw amino-acid sequence, 558 residues long: Formate--tetrahydrofolate ligase (558 aa).

67–74 (TPAGEGKT) contributes to the ATP binding site.

Belongs to the formate--tetrahydrofolate ligase family.

The enzyme catalyses (6S)-5,6,7,8-tetrahydrofolate + formate + ATP = (6R)-10-formyltetrahydrofolate + ADP + phosphate. It participates in one-carbon metabolism; tetrahydrofolate interconversion. This is Formate--tetrahydrofolate ligase from Roseobacter denitrificans (strain ATCC 33942 / OCh 114) (Erythrobacter sp. (strain OCh 114)).